A 205-amino-acid chain; its full sequence is Rho GDP-dissociation inhibitor (205 aa).

A compositionally biased stretch (polar residues) spans 1 to 11; that stretch reads MSVNNEVSADQ. Residues 1-31 form a disordered region; the sequence is MSVNNEVSADQHNPELEDDTFEHGPPVSLGE. Position 63 is a phosphoserine (serine 63).

The protein belongs to the Rho GDI family.

Its subcellular location is the cytoplasm. The protein localises to the nucleus. Functionally, regulates the GDP/GTP exchange reaction of the Rho proteins by inhibiting the dissociation of GDP from them, and the subsequent binding of GTP to them. The sequence is that of Rho GDP-dissociation inhibitor from Schizosaccharomyces pombe (strain 972 / ATCC 24843) (Fission yeast).